The following is a 376-amino-acid chain: O-demethylpuromycin-O-methyltransferase (376 aa).

Residues 1–28 form a disordered region; sequence MAPTEATRGGPADPAPAPEAHRGGHTEH. A compositionally biased stretch (basic and acidic residues) spans 19-28; the sequence is EAHRGGHTEH. S-adenosyl-L-methionine contacts are provided by residues D235 and 261 to 263; that span reads GDF. The active-site Proton acceptor is the H281.

It belongs to the class I-like SAM-binding methyltransferase superfamily. Cation-independent O-methyltransferase family.

It carries out the reaction O-demethylpuromycin + S-adenosyl-L-methionine = puromycin + S-adenosyl-L-homocysteine + H(+). In Streptomyces alboniger, this protein is O-demethylpuromycin-O-methyltransferase (dmpM).